Here is a 250-residue protein sequence, read N- to C-terminus: LOB domain-containing protein 37 (250 aa).

Residues 1-107 enclose the LOB domain; that stretch reads MSCNGCRVLR…VETVLRGGSL (107 aa). The tract at residues 145–227 is disordered; it reads DSTDRNIYHH…DSGTTTTTTA (83 aa). A compositionally biased stretch (low complexity) spans 157–170; sequence FSSSRSRSTMDSSS.

This sequence belongs to the LOB domain-containing protein family. Expressed in young shoots, roots, stems, leaves and flowers.

The chain is LOB domain-containing protein 37 (LBD37) from Arabidopsis thaliana (Mouse-ear cress).